The sequence spans 261 residues: Hydroxyethylthiazole kinase (261 aa).

Methionine 38 serves as a coordination point for substrate. ATP contacts are provided by arginine 114 and threonine 159. Glycine 186 provides a ligand contact to substrate.

This sequence belongs to the Thz kinase family. It depends on Mg(2+) as a cofactor.

The catalysed reaction is 5-(2-hydroxyethyl)-4-methylthiazole + ATP = 4-methyl-5-(2-phosphooxyethyl)-thiazole + ADP + H(+). Its pathway is cofactor biosynthesis; thiamine diphosphate biosynthesis; 4-methyl-5-(2-phosphoethyl)-thiazole from 5-(2-hydroxyethyl)-4-methylthiazole: step 1/1. Its function is as follows. Catalyzes the phosphorylation of the hydroxyl group of 4-methyl-5-beta-hydroxyethylthiazole (THZ). The sequence is that of Hydroxyethylthiazole kinase from Halalkalibacterium halodurans (strain ATCC BAA-125 / DSM 18197 / FERM 7344 / JCM 9153 / C-125) (Bacillus halodurans).